The chain runs to 44 residues: Photosystem I reaction center subunit IX (44 aa).

Residues 7–27 form a helical membrane-spanning segment; the sequence is YLSVAPVLSTLWFGSLAGLLI.

The protein belongs to the PsaJ family.

It localises to the plastid. Its subcellular location is the chloroplast thylakoid membrane. Its function is as follows. May help in the organization of the PsaE and PsaF subunits. The chain is Photosystem I reaction center subunit IX from Lactuca sativa (Garden lettuce).